Here is a 2595-residue protein sequence, read N- to C-terminus: Glucosylceramide transporter ABCA12 (2595 aa).

A helical transmembrane segment spans residues 23-43 (PLWTLVLILWPVIIFIILAIT). N-linked (GlcNAc...) asparagine glycans are attached at residues Asn-156, Asn-174, Asn-214, Asn-275, Asn-333, Asn-367, Asn-383, Asn-412, Asn-435, Asn-528, Asn-543, Asn-577, Asn-608, Asn-623, Asn-648, Asn-752, Asn-826, Asn-920, and Asn-963. The next 3 helical transmembrane spans lie at 1065–1085 (VSYSLPIVLMVAWVVFIAAFV), 1112–1132 (FAWLIESVGFLLVTIVILIII), and 1145–1165 (FILFLYFSDYSFSVIAMSYLI). Residue Asn-1170 is glycosylated (N-linked (GlcNAc...) asparagine). A run of 3 helical transmembrane segments spans residues 1174–1194 (IAALIGSLIYIIAFFPFIVLV), 1200–1220 (LSYVLKVFMSLLSPTAFSYAS), and 1250–1270 (FGWLCCLILADSFIYFLIAWY). The ABC transporter 1 domain occupies 1346–1577 (VALHGVTKIY…FGDGYHLTLT (232 aa)). 1378–1385 (GPNGAGKT) serves as a coordination point for ATP. Residues Asn-1524, Asn-1663, and Asn-1704 are each glycosylated (N-linked (GlcNAc...) asparagine). The chain crosses the membrane as a helical span at residues 1747–1767 (LIAQVILPIVFVTTAMGLGTL). Asn-1769, Asn-1819, Asn-1835, Asn-1876, Asn-1921, and Asn-1952 each carry an N-linked (GlcNAc...) asparagine glycan. A run of 4 helical transmembrane segments spans residues 1979–1999 (ATISSLIDILVALSILMGYSV), 2035–2055 (FIYDMVFYLVPVAFSIGIIAI), 2072–2092 (LLLLLFGYATFSWMYLLAGLF), and 2103–2123 (VCVNLFFGINSIVSLSVVYFL). Residue Asn-2178 is glycosylated (N-linked (GlcNAc...) asparagine). The chain crosses the membrane as a helical span at residues 2187 to 2207 (GAMFVALVSQGTMFFSLRLLI). 2 N-linked (GlcNAc...) asparagine glycosylation sites follow: Asn-2208 and Asn-2223. Positions 2254–2489 (VQLYCLTKTY…FGRGFTVKVH (236 aa)) constitute an ABC transporter 2 domain. The helical transmembrane segment at 2270 to 2290 (IIAVNNISIGIPAGECFGLLG) threads the bilayer. ATP is bound at residue 2290 to 2297 (GVNGAGKT). N-linked (GlcNAc...) asparagine glycans are attached at residues Asn-2318, Asn-2542, and Asn-2547. The segment at 2571–2595 (SYETADTSSQGSTISVDSQDDQMES) is disordered. Positions 2574–2587 (TADTSSQGSTISVD) are enriched in polar residues.

It belongs to the ABC transporter superfamily. ABCA family. As to quaternary structure, interacts with NR1H2 and ABCA1; this interaction is required for ABCA1 localization to the cell surface and is necessary for its normal activity and stability. As to expression, mainly expressed in the stomach, placenta, testis and fetal brain. Expressed in the upper epidermal layers, mainly the granular layers, of skin. Expressed throughout the normal interfollicular epidermis with prominent expression in the stratum granulosum. Expressed in alpha and beta cells of pancreatic islets.

Its subcellular location is the cytoplasmic vesicle. The protein resides in the secretory vesicle membrane. It is found in the golgi apparatus membrane. It catalyses the reaction ATP + H2O + phospholipidSide 1 = ADP + phosphate + phospholipidSide 2.. The catalysed reaction is a beta-D-glucosylceramide(in) + ATP + H2O = a beta-D-glucosylceramide(out) + ADP + phosphate + H(+). Functionally, transports lipids such as glucosylceramides from the outer to the inner leaflet of lamellar granules (LGs) membrane, whereby the lipids are finally transported to the keratinocyte periphery via the trans-Golgi network and LGs and released to the apical surface of the granular keratinocytes to form lipid lamellae in the stratum corneum of the epidermis, which is essential for skin barrier function. In the meantime, participates in the transport of the lamellar granules-associated proteolytic enzymes, in turn regulates desquamation and keratinocyte differentiation. Furthermore, is essential for the regulation of cellular cholesterol homeostasis by regulating ABCA1-dependent cholesterol efflux from macrophages through interaction with NR1H2 and ABCA1. Plays pleiotropic roles in regulating glucose stimulated insulin secretion from beta cells, regulating the morphology and fusion of insulin granules, lipid raft abundance and the actin cytoskeleton. Also involved in lung surfactant biogenesis. The polypeptide is Glucosylceramide transporter ABCA12 (Homo sapiens (Human)).